The sequence spans 403 residues: 8-amino-7-oxononanoate synthase (403 aa).

Substrate is bound at residue Arg-22. 109-110 (GF) contributes to the pyridoxal 5'-phosphate binding site. His-134 is a binding site for substrate. 3 residues coordinate pyridoxal 5'-phosphate: Ser-178, His-206, and Thr-232. Lys-235 is modified (N6-(pyridoxal phosphate)lysine). Substrate is bound at residue Thr-348. The interval 383–403 (SNDSGSKPSIESSFELKKEAQ) is disordered. The span at 385 to 394 (DSGSKPSIES) shows a compositional bias: polar residues.

It belongs to the class-II pyridoxal-phosphate-dependent aminotransferase family. BioF subfamily. As to quaternary structure, homodimer. Requires pyridoxal 5'-phosphate as cofactor.

The catalysed reaction is 6-carboxyhexanoyl-[ACP] + L-alanine + H(+) = (8S)-8-amino-7-oxononanoate + holo-[ACP] + CO2. The protein operates within cofactor biosynthesis; biotin biosynthesis. Functionally, catalyzes the decarboxylative condensation of pimeloyl-[acyl-carrier protein] and L-alanine to produce 8-amino-7-oxononanoate (AON), [acyl-carrier protein], and carbon dioxide. The sequence is that of 8-amino-7-oxononanoate synthase from Vibrio atlanticus (strain LGP32) (Vibrio splendidus (strain Mel32)).